A 329-amino-acid chain; its full sequence is Probable acyltransferase FabY (329 aa).

Residues 18 to 162 (YHLRVPQTEE…RHFLMIKPVA (145 aa)) form the N-acetyltransferase domain.

The protein belongs to the acetyltransferase family. FabY subfamily.

The protein operates within lipid metabolism; fatty acid biosynthesis. Supports initiation of fatty acid biosynthesis in the absence of FabH. This chain is Probable acyltransferase FabY, found in Escherichia coli O157:H7.